We begin with the raw amino-acid sequence, 378 residues long: MKFFTALAAVGALLAPAVALPTPASEASHNQTLSVRLVRAGHTMVRAIVTNNGERPLHLLSFNTIMDENPTSKVDVSHEDGGEVEFLGMLPRYDLSDLTEDLFTRLAPKDSVEHLFDIATVHDLKWDGKYTLTARGAIPVAEDGGTDIIDHVYYESNALEMDIDARKAAMVPRAFDDYFSKGLDKRRPLDICNPMKEKALRAALQDAQKVATEAAAAAQNNTEKVFEFFRARDPGTRKEVSKRLASISGVATMDGGSVTWFCSDGPRRCSPRIIAYTFPARNEVHPCSLFWQLPHRTNECHRQDRIGTVIHEGAHNPNAVTPHCKDHGYGYNRATALSHQRAMGNADNYALFANARQLVFCLLHLFLALPFIYIFANF.

A signal peptide spans 1–19 (MKFFTALAAVGALLAPAVA). Residues 20 to 186 (LPTPASEASH…DYFSKGLDKR (167 aa)) constitute a propeptide that is removed on maturation. Intrachain disulfides connect C192/C262 and C269/C287. H311 serves as a coordination point for Zn(2+). Residue E312 is part of the active site. Positions 315 and 326 each coordinate Zn(2+).

Belongs to the peptidase M35 family. Zn(2+) is required as a cofactor.

It is found in the secreted. The catalysed reaction is Preferential cleavage of bonds with hydrophobic residues in P1'. Also 3-Asn-|-Gln-4 and 8-Gly-|-Ser-9 bonds in insulin B chain.. In terms of biological role, secreted metalloproteinase that allows assimilation of proteinaceous substrates. Shows high activities on basic nuclear substrates such as histone and protamine. May be involved in virulence. This chain is Neutral protease 2 homolog ARB_04336, found in Arthroderma benhamiae (strain ATCC MYA-4681 / CBS 112371) (Trichophyton mentagrophytes).